A 251-amino-acid chain; its full sequence is Imidazole glycerol phosphate synthase subunit HisF (251 aa).

Catalysis depends on residues Asp-11 and Asp-130.

Belongs to the HisA/HisF family. As to quaternary structure, heterodimer of HisH and HisF.

It localises to the cytoplasm. It carries out the reaction 5-[(5-phospho-1-deoxy-D-ribulos-1-ylimino)methylamino]-1-(5-phospho-beta-D-ribosyl)imidazole-4-carboxamide + L-glutamine = D-erythro-1-(imidazol-4-yl)glycerol 3-phosphate + 5-amino-1-(5-phospho-beta-D-ribosyl)imidazole-4-carboxamide + L-glutamate + H(+). The protein operates within amino-acid biosynthesis; L-histidine biosynthesis; L-histidine from 5-phospho-alpha-D-ribose 1-diphosphate: step 5/9. Its function is as follows. IGPS catalyzes the conversion of PRFAR and glutamine to IGP, AICAR and glutamate. The HisF subunit catalyzes the cyclization activity that produces IGP and AICAR from PRFAR using the ammonia provided by the HisH subunit. This chain is Imidazole glycerol phosphate synthase subunit HisF, found in Flavobacterium johnsoniae (strain ATCC 17061 / DSM 2064 / JCM 8514 / BCRC 14874 / CCUG 350202 / NBRC 14942 / NCIMB 11054 / UW101) (Cytophaga johnsonae).